The sequence spans 187 residues: Protein TIFY 3B (187 aa).

Residues 1–10 (MTKVKDEPRA) are compositionally biased toward basic and acidic residues. The segment at 1-50 (MTKVKDEPRASVEGGCGVADGDGGAAEIGGTGSVEKSINEVRSTEIQTAE) is disordered. The segment covering 14 to 32 (GGCGVADGDGGAAEIGGTG) has biased composition (gly residues). One can recognise a Tify domain in the interval 51 to 86 (PTVPPNQLTIFFGGSVTVFDGLPSEKVQEILRIAAK). Residues 139 to 163 (PIARRHSLQRFLEKRRDRLVNKNPY) carry the Jas motif. A Nuclear localization signal motif is present at residues 141–148 (ARRHSLQR). The disordered stretch occupies residues 152–187 (KRRDRLVNKNPYPTSDFKKTDVPTGNVSIKEEFPTA).

It belongs to the TIFY/JAZ family. Interacts with MYC2, AFPH2/NINJA, TIFY10A/JAZ1, TIFY10B/JAZ2, TIFY11A/JAZ5, TIFY11B/JAZ6, TIFY5A/JAZ8 and TIFY9/JAZ10. In terms of assembly, (Microbial infection) Interacts with the pathogenic Pseudomonas syringae HopZ1a protein. Post-translationally, (Microbial infection) Acetylated by Pseudomonas syringae HopZ1a. In terms of processing, ubiquitinated. Targeted for degradation by the SCF(COI1) E3 ubiquitin ligase-proteasome pathway during jasmonate signaling.

Its subcellular location is the nucleus. Its function is as follows. Repressor of jasmonate responses. This is Protein TIFY 3B from Arabidopsis thaliana (Mouse-ear cress).